Consider the following 139-residue polypeptide: Large ribosomal subunit protein uL16 (139 aa).

Over residues 1-16 (MLIPKRTKYRKQHRPV) the composition is skewed to basic residues. Positions 1 to 22 (MLIPKRTKYRKQHRPVRSGMSK) are disordered.

This sequence belongs to the universal ribosomal protein uL16 family. In terms of assembly, part of the 50S ribosomal subunit.

Binds 23S rRNA and is also seen to make contacts with the A and possibly P site tRNAs. This chain is Large ribosomal subunit protein uL16, found in Bifidobacterium longum (strain DJO10A).